The primary structure comprises 71 residues: Exodeoxyribonuclease 7 small subunit (71 aa).

It belongs to the XseB family. In terms of assembly, heterooligomer composed of large and small subunits.

Its subcellular location is the cytoplasm. It catalyses the reaction Exonucleolytic cleavage in either 5'- to 3'- or 3'- to 5'-direction to yield nucleoside 5'-phosphates.. In terms of biological role, bidirectionally degrades single-stranded DNA into large acid-insoluble oligonucleotides, which are then degraded further into small acid-soluble oligonucleotides. The protein is Exodeoxyribonuclease 7 small subunit of Streptococcus uberis (strain ATCC BAA-854 / 0140J).